The following is a 571-amino-acid chain: Urease subunit alpha (571 aa).

The Urease domain occupies 131 to 571 (GGIDAHIHFI…LPMAQRYFLF (441 aa)). Positions 136, 138, and 219 each coordinate Ni(2+). An N6-carboxylysine modification is found at K219. H221 contacts substrate. Residues H248 and H274 each coordinate Ni(2+). H322 functions as the Proton donor in the catalytic mechanism. Residue D362 participates in Ni(2+) binding.

The protein belongs to the metallo-dependent hydrolases superfamily. Urease alpha subunit family. As to quaternary structure, heterotrimer of UreA (gamma), UreB (beta) and UreC (alpha) subunits. Three heterotrimers associate to form the active enzyme. The cofactor is Ni cation. Carboxylation allows a single lysine to coordinate two nickel ions.

The protein resides in the cytoplasm. It carries out the reaction urea + 2 H2O + H(+) = hydrogencarbonate + 2 NH4(+). It participates in nitrogen metabolism; urea degradation; CO(2) and NH(3) from urea (urease route): step 1/1. This is Urease subunit alpha from Nostoc punctiforme (strain ATCC 29133 / PCC 73102).